A 524-amino-acid polypeptide reads, in one-letter code: Bifunctional NAD(P)H-hydrate repair enzyme Nnr (524 aa).

Residues 1-219 (MKVARVSEIK…ISYPRALLED (219 aa)) are NAD(P)H-hydrate epimerase. The YjeF N-terminal domain maps to 9 to 218 (IKLLDREAAE…HISYPRALLE (210 aa)). The interval 57–61 (NNGGD) is NADPHX 1; for epimerase activity. Positions 58 and 128 each coordinate K(+). The interval 132-138 (GTGLSRP) is NADPHX 1; for epimerase activity. (6S)-NADPHX-binding residues include Tyr143 and Asp161. Ser164 is a K(+) binding site. Positions 224 to 507 (VETNDPVPLP…NYLPKALRAL (284 aa)) constitute a YjeF C-terminal domain. Residues 224-524 (VETNDPVPLP…LERYTIKVLP (301 aa)) form an ADP-dependent (S)-NAD(P)H-hydrate dehydratase region. Gly330 contributes to the (6S)-NADPHX binding site. Residues 381-387 (HAGEMSR) form an NADPHX 2; for dehydratase activity region. ADP-binding positions include 418 to 422 (KGAHT) and 438 to 447 (NPGMATAGSG). Asp448 serves as a coordination point for (6S)-NADPHX.

It in the N-terminal section; belongs to the NnrE/AIBP family. In the C-terminal section; belongs to the NnrD/CARKD family. Requires K(+) as cofactor.

The catalysed reaction is (6S)-NADHX + ADP = AMP + phosphate + NADH + H(+). It catalyses the reaction (6S)-NADPHX + ADP = AMP + phosphate + NADPH + H(+). The enzyme catalyses (6R)-NADHX = (6S)-NADHX. It carries out the reaction (6R)-NADPHX = (6S)-NADPHX. In terms of biological role, bifunctional enzyme that catalyzes the epimerization of the S- and R-forms of NAD(P)HX and the dehydration of the S-form of NAD(P)HX at the expense of ADP, which is converted to AMP. This allows the repair of both epimers of NAD(P)HX, a damaged form of NAD(P)H that is a result of enzymatic or heat-dependent hydration. This Thermofilum pendens (strain DSM 2475 / Hrk 5) protein is Bifunctional NAD(P)H-hydrate repair enzyme Nnr (nnr).